Here is a 469-residue protein sequence, read N- to C-terminus: Probable Xaa-Pro aminopeptidase PEPP (469 aa).

Residues Asp-264, Asp-275, Glu-398, and Glu-438 each contribute to the Mn(2+) site.

It belongs to the peptidase M24B family. Requires Mn(2+) as cofactor.

The catalysed reaction is Release of any N-terminal amino acid, including proline, that is linked to proline, even from a dipeptide or tripeptide.. Its function is as follows. Catalyzes the removal of a penultimate prolyl residue from the N-termini of peptides. This Ajellomyces capsulatus (strain G186AR / H82 / ATCC MYA-2454 / RMSCC 2432) (Darling's disease fungus) protein is Probable Xaa-Pro aminopeptidase PEPP (PEPP).